The chain runs to 1275 residues: Membrane-associated guanylate kinase, WW and PDZ domain-containing protein 2 (1275 aa).

The region spanning 17–101 (ESVIGRNPEG…PLRLKCVKQG (85 aa)) is the PDZ 1 domain. One can recognise a Guanylate kinase-like domain in the interval 109 to 283 (RHYLNLRFQK…PVYSQPEELK (175 aa)). Residues 203–305 (LPGATPSAEG…ENEDSDPLPD (103 aa)) form a disordered region. Positions 280–295 (EELKDQMDDTKPTKPE) are enriched in basic and acidic residues. WW domains are found at residues 301-334 (DPLP…DPRL) and 347-380 (NELP…NPVL). Residues 301–380 (DPLPDNWEMA…RRTQFENPVL (80 aa)) form an interaction with DDN region. A Phosphotyrosine modification is found at tyrosine 361. PDZ domains follow at residues 425-509 (STTL…CRGY) and 604-682 (TLTI…HRGG). A Phosphoserine modification is found at serine 685. Positions 698–740 (ENQGSPQTSLSAPAVPQNLPFPPALHRSSFPDSTEAFDPRKPD) are disordered. Residues 699-708 (NQGSPQTSLS) are compositionally biased toward polar residues. The 83-residue stretch at 777–859 (DVHLRRMESG…NGQVNLTVRR (83 aa)) folds into the PDZ 4 domain. Position 826 is a phosphotyrosine (tyrosine 826). Residues 868–912 (CPENGRSPGSVSTHHSSPRSDYATYSNSNHAAPSSNASPPEGFAS) are disordered. Serine 883 and serine 884 each carry phosphoserine. Residues 893–907 (SNSNHAAPSSNASPP) are compositionally biased toward low complexity. A PDZ 5 domain is found at 919 to 1009 (DVVIHRKENE…SVTLRIIPQE (91 aa)). Polar residues predominate over residues 1010 to 1040 (ELNSPTSAPSSEKQSPMAQQHSPLAQQSPLA). The tract at residues 1010–1128 (ELNSPTSAPS…PDTRQYPLSD (119 aa)) is disordered. Position 1013 is a phosphoserine (serine 1013). Basic and acidic residues predominate over residues 1067 to 1083 (NSYRSEVKARQDVKPDI). In terms of domain architecture, PDZ 6 spans 1139 to 1221 (TVDMEKGAKG…RVRLLLKRGT (83 aa)).

The protein belongs to the MAGUK family. Interacts (via its WW domains) with DRPLA. Interacts (via its second PDZ domain) with PTEN (via unphosphorylated C-terminus); this interaction diminishes the degradation rate of PTEN. Interacts (via guanylate kinase domain) with DLGAP1. Interacts (via the PDZ domains) with GRIN2A, GRID2 and NLGN1. Interacts with CTNND2, CTNNB1 and MAGUIN-1. Interacts with ACVR2A, SMAD2 and SMAD3. Part of a complex consisting of MAGI2/ARIP1, ACVR2A, ACVR1B and SMAD3. May interact with HTR2A. Interacts with RAPGEF2. Identified in a complex with ACTN4, CASK, IQGAP1, NPHS1, SPTAN1 and SPTBN1. Interacts with DDN. Found in a complex, at least composed of KIDINS220, MAGI2, NTRK1 and RAPGEF2; the complex is mainly formed at late endosomes in a NGF-dependent manner. Interacts with RAPGEF2; the interaction occurs before or after nerve growth factor (NGF) stimulation. Interacts (via PDZ domain) with KIDINS220 (via C-terminal domain). Interacts with IGSF9 and HTR4. Interacts with DLL1. Found in a complex with IGSF9B and NLGN2; the interaction with IGSF9B is mediated via the PDZ 5 and PDZ 6 domains, while the interaction with NLGN2 is mediated via the WW1, WW2 and PDZ2 domains. Interacts (via PDZ 6 domain) with USH1G (via SAM domain); the interaction is triggered by phosphorylation of USH1G by CK2 and negatively regulates MAGI2-mediated endocytosis. Expressed throughout the retina except in the nuclear layers and the photoreceptor outer segments (at protein level). Highest retinal expression is observed in the outer plexiform layer, the outer limiting membrane and the inner segment of photoreceptor cells (at protein level). Expressed in brain.

It localises to the cytoplasm. It is found in the late endosome. The protein localises to the synapse. Its subcellular location is the synaptosome. The protein resides in the cell membrane. It localises to the cytoskeleton. It is found in the microtubule organizing center. The protein localises to the centrosome. Its subcellular location is the cell projection. The protein resides in the cilium. It localises to the centriole. It is found in the photoreceptor inner segment. The protein localises to the photoreceptor outer segment. Its function is as follows. Seems to act as a scaffold molecule at synaptic junctions by assembling neurotransmitter receptors and cell adhesion proteins. Plays a role in nerve growth factor (NGF)-induced recruitment of RAPGEF2 to late endosomes and neurite outgrowth. May play a role in regulating activin-mediated signaling in neuronal cells. Enhances the ability of PTEN to suppress AKT1 activation. Plays a role in receptor-mediated clathrin-dependent endocytosis which is required for ciliogenesis. This chain is Membrane-associated guanylate kinase, WW and PDZ domain-containing protein 2 (Magi2), found in Mus musculus (Mouse).